The primary structure comprises 347 residues: Quinolinate synthase (347 aa).

Iminosuccinate is bound by residues His47 and Ser68. [4Fe-4S] cluster is bound at residue Cys113. Iminosuccinate-binding positions include Tyr139–Asn141 and Ser156. Cys200 contributes to the [4Fe-4S] cluster binding site. Iminosuccinate is bound by residues His226–Glu228 and Thr243. Position 297 (Cys297) interacts with [4Fe-4S] cluster.

The protein belongs to the quinolinate synthase family. Type 1 subfamily. It depends on [4Fe-4S] cluster as a cofactor.

The protein resides in the cytoplasm. It carries out the reaction iminosuccinate + dihydroxyacetone phosphate = quinolinate + phosphate + 2 H2O + H(+). Its pathway is cofactor biosynthesis; NAD(+) biosynthesis; quinolinate from iminoaspartate: step 1/1. Functionally, catalyzes the condensation of iminoaspartate with dihydroxyacetone phosphate to form quinolinate. In Escherichia coli (strain K12 / MC4100 / BW2952), this protein is Quinolinate synthase.